The chain runs to 688 residues: MADLEAVLADVSYLMAMEKSKTAPAARASKKVVLPEPSIRSVMQRYLAERNEITFDKIFNQKIGFLLFKDFCLNEIGEAVPQVKFYEEIKEYEKLDNEEDRLRRSRQMYDAYIMRELLSSTHQFSKQAVEHVQSHLSKKQVTATLFQPYIEEICESLRGDIFQKFMESDKFTRFCQWKNVELNIHLSMNDFSVHRIIGRGGFGEVYGCRKADTGKMYAMKCLDKKRVKMKQGETLALNERIMLSLVSTGDCPFIVCMTYAFHTPDKLCFILDLMNGGDMHYHLSQHGVFSEKEMRFYASEIILGLEHMHTCFVVYRDLKPANILLDEYGHVRISDLGLACDFSKKKPHASVGTHGYMAPEVLQKGTCYDSSADWFSLGCMLFKLLRGHSPFRQHKTKDKHEIDRMTLTVNVQLPDAFSPELRSLLEGLLQRDVSQRLGCGGGGARELKEHIFFKGIDWQHVYLRKYPPPLIPPRGEVNAADAFDIGSFDEEDTKGIKLLDCDQDLYKNFPLVISERWQQEVVETIYDAVNADTDKIEARRKAKNKQLGQEEDYAMGKDCIMHGYMLKLGNPFLTQWQRRYFYLFPNRLEWRGEGESRQSLLTMEQIMSVEETQIKDRKCILLRIKGGKQFVLQCESDPEFAQWLKELTCTFNEAQRLLRRAPKFLNKPRAAILEFSKPPLCHRNSSGL.

The tract at residues 1–190 (MADLEAVLAD…ELNIHLSMND (190 aa)) is N-terminal. The RGS domain occupies 54-175 (TFDKIFNQKI…MESDKFTRFC (122 aa)). The region spanning 191-453 (FSVHRIIGRG…ARELKEHIFF (263 aa)) is the Protein kinase domain. Residues 197-205 (IGRGGFGEV) and Lys-220 contribute to the ATP site. Asp-317 (proton acceptor) is an active-site residue. One can recognise an AGC-kinase C-terminal domain in the interval 454–521 (KGIDWQHVYL…VISERWQQEV (68 aa)). One can recognise a PH domain in the interval 558-652 (DCIMHGYMLK…WLKELTCTFN (95 aa)).

The protein belongs to the protein kinase superfamily. AGC Ser/Thr protein kinase family. GPRK subfamily. In terms of assembly, interacts with GIT1. Post-translationally, ubiquitinated.

It is found in the postsynapse. It localises to the presynapse. It catalyses the reaction [beta-adrenergic receptor] + ATP = [beta-adrenergic receptor]-phosphate + ADP + H(+). Its function is as follows. Specifically phosphorylates the agonist-occupied form of the beta-adrenergic and closely related receptors. The protein is G protein-coupled receptor kinase 3 of Mus musculus (Mouse).